The following is a 184-amino-acid chain: ATP-dependent protease subunit HslV (184 aa).

The active site involves threonine 12. The Na(+) site is built by alanine 166, cysteine 169, and threonine 172.

Belongs to the peptidase T1B family. HslV subfamily. A double ring-shaped homohexamer of HslV is capped on each side by a ring-shaped HslU homohexamer. The assembly of the HslU/HslV complex is dependent on binding of ATP.

It is found in the cytoplasm. It carries out the reaction ATP-dependent cleavage of peptide bonds with broad specificity.. Its activity is regulated as follows. Allosterically activated by HslU binding. In terms of biological role, protease subunit of a proteasome-like degradation complex believed to be a general protein degrading machinery. The polypeptide is ATP-dependent protease subunit HslV (Brucella melitensis biotype 1 (strain ATCC 23456 / CCUG 17765 / NCTC 10094 / 16M)).